The chain runs to 115 residues: Large ribosomal subunit protein P2z (115 aa).

Residues 62–115 (LASVPSGGGGGVAVASATSGGGGGGGAPAAESKKEEKKEEKEESDDDMGFSLFE) are disordered. The span at 92-102 (ESKKEEKKEEK) shows a compositional bias: basic and acidic residues. Residue Ser105 is modified to Phosphoserine.

Belongs to the eukaryotic ribosomal protein P1/P2 family. P1 and P2 exist as dimers at the large ribosomal subunit. Phosphorylated.

Its function is as follows. Plays an important role in the elongation step of protein synthesis. This is Large ribosomal subunit protein P2z (RPP2A) from Arabidopsis thaliana (Mouse-ear cress).